The chain runs to 946 residues: ATP-dependent 6-phosphofructokinase subunit beta (946 aa).

Residues 1 to 559 (MISIVNGTST…HLANFMAMNT (559 aa)) are N-terminal catalytic PFK domain 1. ATP-binding positions include glycine 192, 256 to 257 (RC), and 286 to 289 (GDGS). Aspartate 287 contributes to the Mg(2+) binding site. Beta-D-fructose 6-phosphate is bound by residues 332–334 (SID), arginine 369, 376–378 (MGR), glutamate 433, arginine 461, and 467–470 (HVQR). Residue aspartate 334 is the Proton acceptor of the active site. Positions 560–573 (ANHEKPTLPREKRK) are interdomain linker. The C-terminal regulatory PFK domain 2 stretch occupies residues 574-946 (KIAIINIGAP…LVGRTRLDKP (373 aa)). Beta-D-fructose 2,6-bisphosphate-binding positions include arginine 644, 702 to 706 (TISNN), 747 to 749 (QGG), lysine 833, 839 to 842 (HVQQ), and arginine 920.

It belongs to the phosphofructokinase type A (PFKA) family. ATP-dependent PFK group I subfamily. Eukaryotic two domain clade 'E' sub-subfamily. Heterooctamer of 4 alpha and 4 beta chains. Requires Mg(2+) as cofactor.

Its subcellular location is the cytoplasm. It carries out the reaction beta-D-fructose 6-phosphate + ATP = beta-D-fructose 1,6-bisphosphate + ADP + H(+). It functions in the pathway carbohydrate degradation; glycolysis; D-glyceraldehyde 3-phosphate and glycerone phosphate from D-glucose: step 3/4. With respect to regulation, allosterically activated by ADP, AMP, or fructose 2,6-bisphosphate, and allosterically inhibited by ATP or citrate. In terms of biological role, catalyzes the phosphorylation of D-fructose 6-phosphate to fructose 1,6-bisphosphate by ATP, the first committing step of glycolysis. In Candida albicans (Yeast), this protein is ATP-dependent 6-phosphofructokinase subunit beta (PFK2).